A 251-amino-acid polypeptide reads, in one-letter code: MNKYDRLDEITKLVNKRGSVRTNEIVEDLNVSDMTVRRDLAELEEKGVLTKIHGGARSNSAFQYKEMSHQEKHTRFIEEKRFIAKNAVDLIEDGDTIFLGPGTTVQKLAEEINHYSLTIITNCLPVFNILIKKQTLHFRVYLLGGEMRDLTEAFVGEMTNQLLSQLRFSKMFFSSNGVKDGLAMTSSIEEAYTQQIALSHSLEKYLLIDSSKIGKDDFSSFCELRELNAVLTDNNDLEKKEKIESYVEVIS.

Residues 3–58 form the HTH deoR-type domain; sequence KYDRLDEITKLVNKRGSVRTNEIVEDLNVSDMTVRRDLAELEEKGVLTKIHGGARS. A DNA-binding region (H-T-H motif) is located at residues 20-39; it reads VRTNEIVEDLNVSDMTVRRD.

Repressor of the lactose catabolism operon. Galactose-6-phosphate is the inducer. This chain is Lactose phosphotransferase system repressor (lacR), found in Staphylococcus epidermidis (strain ATCC 35984 / DSM 28319 / BCRC 17069 / CCUG 31568 / BM 3577 / RP62A).